The sequence spans 559 residues: POU domain protein 1 (559 aa).

The POU-specific domain occupies 259-333 (EDLPSSDDLE…LLQKWLHEAD (75 aa)). The segment at residues 351-410 (KRKKRTSIEANVKSILESSFMKLSKPSAQDISSLAEKLSLEKEVVRVWFCNRRQKEKRIT) is a DNA-binding region (homeobox).

This sequence belongs to the POU transcription factor family.

The protein localises to the nucleus. The polypeptide is POU domain protein 1 (POU1) (Dugesia japonica (Planarian)).